A 465-amino-acid chain; its full sequence is MAAQDYVVKDIALAAYGRKEIDIAETEMPGLMACREEFSFSQPLRGARISGSLHITIQTAVLIETLKAIGADVRWSSSNIFSTQDHAAAAIAATGTAVFGVKGETLEEYWAYIDAIFQWPDGNPSNLILDDGADATNYILTGSRAEVNKDILSYPKTKEEEFFFKQIQKRMKITPGFFTRQRTAIKGVSEETTTGVLRLYQLQKEGLLPFPAINVNDSVTKSKFDNKYGCKESLVDGIRRGTDVMIAGKTAIVCGYGNVGKGSAASLSGAGARVKITEIDPICALQAAMDGYEVVTLDDAASSADIIITTTGNKDVVRLDHMRQVKDMCILGNIGHFDNEIQVSALRNLPWTNIKPQVDIVTFPDGKRIILLSEGRLLNLGNATGHPSFVMSASFTNQVLAQIELFTRAEHYKNEVTVLPKRLDEKVARLHLDRLGVKLSVLSEEQAVYIGVTPQGPYKPNHYRY.

Residues Thr-56, Asp-131, and Glu-191 each coordinate substrate. 192–194 (TTT) is an NAD(+) binding site. Positions 221 and 225 each coordinate substrate. NAD(+)-binding positions include Asn-226, 255–260 (GYGNVG), Glu-278, Asn-313, 334–336 (IGH), and Asn-379.

The protein belongs to the adenosylhomocysteinase family. NAD(+) serves as cofactor.

It is found in the cytoplasm. The enzyme catalyses S-adenosyl-L-homocysteine + H2O = L-homocysteine + adenosine. It participates in amino-acid biosynthesis; L-homocysteine biosynthesis; L-homocysteine from S-adenosyl-L-homocysteine: step 1/1. Functionally, may play a key role in the regulation of the intracellular concentration of adenosylhomocysteine. This Bartonella quintana (strain Toulouse) (Rochalimaea quintana) protein is Adenosylhomocysteinase.